Reading from the N-terminus, the 825-residue chain is Translation initiation factor IF-2 (825 aa).

Composition is skewed to basic and acidic residues over residues 1-19, 35-45, 70-98, and 113-122; these read MTKKQENETSKELGMDNKK, RKGEKKTEGKR, LLKDLKQKQRADEARLDQESKAAKQEYKK, and KKVESVEKPA. The segment at 1-239 is disordered; that stretch reads MTKKQENETS…TQRKDRPLPE (239 aa). Over residues 158–169 the composition is skewed to low complexity; sequence PSSSRRPSSRPS. The segment covering 181 to 191 has biased composition (basic residues); it reads GRRRKSGKPGR. Polar residues predominate over residues 194 to 208; sequence QNSYADQGRGANSNR. Residues 211-220 are compositionally biased toward basic residues; it reads QRKRKNKKHQ. Residues 326–495 enclose the tr-type G domain; the sequence is VRPPVVTIMG…ILEADMLELK (170 aa). Residues 335–342 form a G1 region; the sequence is GHVDHGKT. 335–342 serves as a coordination point for GTP; that stretch reads GHVDHGKT. The segment at 360–364 is G2; sequence GITQN. The G3 stretch occupies residues 381-384; sequence DTPG. GTP-binding positions include 381–385 and 435–438; these read DTPGH and NKMD. The tract at residues 435–438 is G4; that stretch reads NKMD. Residues 471 to 473 are G5; the sequence is SAK.

Belongs to the TRAFAC class translation factor GTPase superfamily. Classic translation factor GTPase family. IF-2 subfamily.

It localises to the cytoplasm. Functionally, one of the essential components for the initiation of protein synthesis. Protects formylmethionyl-tRNA from spontaneous hydrolysis and promotes its binding to the 30S ribosomal subunits. Also involved in the hydrolysis of GTP during the formation of the 70S ribosomal complex. This chain is Translation initiation factor IF-2, found in Lactobacillus delbrueckii subsp. bulgaricus (strain ATCC 11842 / DSM 20081 / BCRC 10696 / JCM 1002 / NBRC 13953 / NCIMB 11778 / NCTC 12712 / WDCM 00102 / Lb 14).